A 101-amino-acid polypeptide reads, in one-letter code: Protein Tat (101 aa).

Residues 1–12 show a composition bias toward basic and acidic residues; sequence MDPVDPRLEPWK. Residues 1 to 20 form a disordered region; sequence MDPVDPRLEPWKHPGSQPKA. The interaction with human CREBBP stretch occupies residues 1 to 24; that stretch reads MDPVDPRLEPWKHPGSQPKAACTS. Positions 1–48 are transactivation; it reads MDPVDPRLEPWKHPGSQPKAACTSCYCKKCCFHCQVCFTTKGLGISYG. Positions 22, 25, and 27 each coordinate Zn(2+). A cysteine-rich region spans residues 22 to 37; sequence CTSCYCKKCCFHCQVC. Lys28 is subject to N6-acetyllysine; by host PCAF. Residues Cys30, His33, Cys34, and Cys37 each coordinate Zn(2+). Residues 38 to 48 are core; the sequence is FTTKGLGISYG. A compositionally biased stretch (basic residues) spans 48-57; it reads GRKKRRQRRR. The segment at 48-101 is disordered; it reads GRKKRRQRRRAPQDSQTHQVSLPKQPASQARGDPTGPKESKKKVERETETDPVD. The short motif at 49-57 is the Nuclear localization signal, RNA-binding (TAR), and protein transduction element; sequence RKKRRQRRR. The segment at 49-86 is interaction with the host capping enzyme RNGTT; the sequence is RKKRRQRRRAPQDSQTHQVSLPKQPASQARGDPTGPKE. 2 positions are modified to N6-acetyllysine; by host EP300 and GCN5L2: Lys50 and Lys51. Arg52 and Arg53 each carry asymmetric dimethylarginine; by host PRMT6. Residues 60 to 75 are compositionally biased toward polar residues; it reads QDSQTHQVSLPKQPAS. Lys71 participates in a covalent cross-link: Glycyl lysine isopeptide (Lys-Gly) (interchain with G-Cter in ubiquitin). A Cell attachment site motif is present at residues 78–80; sequence RGD. The span at 83 to 101 shows a compositional bias: basic and acidic residues; the sequence is GPKESKKKVERETETDPVD.

The protein belongs to the lentiviruses Tat family. As to quaternary structure, interacts with host CCNT1. Associates with the P-TEFb complex composed at least of Tat, P-TEFb (CDK9 and CCNT1), TAR RNA, RNA Pol II. Recruits the HATs CREBBP, TAF1/TFIID, EP300, PCAF and GCN5L2. Interacts with host KAT5/Tip60; this interaction targets the latter to degradation. Interacts with the host deacetylase SIRT1. Interacts with host capping enzyme RNGTT; this interaction stimulates RNGTT. Binds to host KDR, and to the host integrins ITGAV/ITGB3 and ITGA5/ITGB1. Interacts with host KPNB1/importin beta-1 without previous binding to KPNA1/importin alpha-1. Interacts with EIF2AK2. Interacts with host nucleosome assembly protein NAP1L1; this interaction may be required for the transport of Tat within the nucleus, since the two proteins interact at the nuclear rim. Interacts with host C1QBP/SF2P32; this interaction involves lysine-acetylated Tat. Interacts with the host chemokine receptors CCR2, CCR3 and CXCR4. Interacts with host DPP4/CD26; this interaction may trigger an anti-proliferative effect. Interacts with host LDLR. Interacts with the host extracellular matrix metalloproteinase MMP1. Interacts with host PRMT6; this interaction mediates Tat's methylation. Interacts with, and is ubiquitinated by MDM2/Hdm2. Interacts with host PSMC3 and HTATIP2. Interacts with STAB1; this interaction may overcome SATB1-mediated repression of IL2 and IL2RA (interleukin) in T cells by binding to the same domain than HDAC1. Interacts (when acetylated) with human CDK13, thereby increasing HIV-1 mRNA splicing and promoting the production of the doubly spliced HIV-1 protein Nef. Interacts with host TBP; this interaction modulates the activity of transcriptional pre-initiation complex. Interacts with host RELA. Interacts with host PLSCR1; this interaction negatively regulates Tat transactivation activity by altering its subcellular distribution. Asymmetrical arginine methylation by host PRMT6 seems to diminish the transactivation capacity of Tat and affects the interaction with host CCNT1. Post-translationally, acetylation by EP300, CREBBP, GCN5L2/GCN5 and PCAF regulates the transactivation activity of Tat. EP300-mediated acetylation of Lys-50 promotes dissociation of Tat from the TAR RNA through the competitive binding to PCAF's bromodomain. In addition, the non-acetylated Tat's N-terminus can also interact with PCAF. PCAF-mediated acetylation of Lys-28 enhances Tat's binding to CCNT1. Lys-50 is deacetylated by SIRT1. In terms of processing, polyubiquitination by host MDM2 does not target Tat to degradation, but activates its transactivation function and fosters interaction with CCNT1 and TAR RNA. Phosphorylated by EIF2AK2 on serine and threonine residues adjacent to the basic region important for TAR RNA binding and function. Phosphorylation of Tat by EIF2AK2 is dependent on the prior activation of EIF2AK2 by dsRNA.

The protein localises to the host nucleus. The protein resides in the host nucleolus. Its subcellular location is the host cytoplasm. It is found in the secreted. Transcriptional activator that increases RNA Pol II processivity, thereby increasing the level of full-length viral transcripts. Recognizes a hairpin structure at the 5'-LTR of the nascent viral mRNAs referred to as the transactivation responsive RNA element (TAR) and recruits the cyclin T1-CDK9 complex (P-TEFb complex) that will in turn hyperphosphorylate the RNA polymerase II to allow efficient elongation. The CDK9 component of P-TEFb and other Tat-activated kinases hyperphosphorylate the C-terminus of RNA Pol II that becomes stabilized and much more processive. Other factors such as HTATSF1/Tat-SF1, SUPT5H/SPT5, and HTATIP2 are also important for Tat's function. Besides its effect on RNA Pol II processivity, Tat induces chromatin remodeling of proviral genes by recruiting the histone acetyltransferases (HATs) CREBBP, EP300 and PCAF to the chromatin. This also contributes to the increase in proviral transcription rate, especially when the provirus integrates in transcriptionally silent region of the host genome. To ensure maximal activation of the LTR, Tat mediates nuclear translocation of NF-kappa-B by interacting with host RELA. Through its interaction with host TBP, Tat may also modulate transcription initiation. Tat can reactivate a latently infected cell by penetrating in it and transactivating its LTR promoter. In the cytoplasm, Tat is thought to act as a translational activator of HIV-1 mRNAs. In terms of biological role, extracellular circulating Tat can be endocytosed by surrounding uninfected cells via the binding to several surface receptors such as CD26, CXCR4, heparan sulfate proteoglycans (HSPG) or LDLR. Neurons are rarely infected, but they internalize Tat via their LDLR. Through its interaction with nuclear HATs, Tat is potentially able to control the acetylation-dependent cellular gene expression. Modulates the expression of many cellular genes involved in cell survival, proliferation or in coding for cytokines or cytokine receptors. Tat plays a role in T-cell and neurons apoptosis. Tat induced neurotoxicity and apoptosis probably contribute to neuroAIDS. Circulating Tat also acts as a chemokine-like and/or growth factor-like molecule that binds to specific receptors on the surface of the cells, affecting many cellular pathways. In the vascular system, Tat binds to ITGAV/ITGB3 and ITGA5/ITGB1 integrins dimers at the surface of endothelial cells and competes with bFGF for heparin-binding sites, leading to an excess of soluble bFGF. In Homo sapiens (Human), this protein is Protein Tat.